The sequence spans 81 residues: X antigen family member 1 (81 aa).

K12 participates in a covalent cross-link: Glycyl lysine isopeptide (Lys-Gly) (interchain with G-Cter in SUMO2). Phosphoserine is present on S20. Residues K61 and K65 each participate in a glycyl lysine isopeptide (Lys-Gly) (interchain with G-Cter in SUMO2) cross-link.

This sequence belongs to the GAGE family. In terms of tissue distribution, in normal tissues, highly expressed in testis. Expressed also in many different types of cancers: highly expressed in breast cancer, prostate cancer and many types of lung cancers, including squamous cell carcinoma, small cell carcinoma, non-small cell carcinoma, and adenocarcinoma, as well as in Ewing's cell lines, in some Ewing's sarcoma patient samples, and in one of one alveolar rhabdomyosarcoma patient sample.

In Homo sapiens (Human), this protein is X antigen family member 1.